The following is a 56-amino-acid chain: Large ribosomal subunit protein bL33 (56 aa).

Belongs to the bacterial ribosomal protein bL33 family.

The sequence is that of Large ribosomal subunit protein bL33 from Campylobacter hominis (strain ATCC BAA-381 / DSM 21671 / CCUG 45161 / LMG 19568 / NCTC 13146 / CH001A).